The chain runs to 73 residues: Large ribosomal subunit protein bL31 (73 aa).

It belongs to the bacterial ribosomal protein bL31 family. Type A subfamily. In terms of assembly, part of the 50S ribosomal subunit.

Its function is as follows. Binds the 23S rRNA. In Roseobacter denitrificans (strain ATCC 33942 / OCh 114) (Erythrobacter sp. (strain OCh 114)), this protein is Large ribosomal subunit protein bL31 (rpmE).